Here is an 824-residue protein sequence, read N- to C-terminus: Leucine--tRNA ligase (824 aa).

The short motif at 42 to 52 (PYPSGKIHMGH) is the 'HIGH' region element. The 'KMSKS' region motif lies at 581–585 (KMSKS). Lys-584 is a binding site for ATP.

Belongs to the class-I aminoacyl-tRNA synthetase family.

The protein resides in the cytoplasm. The enzyme catalyses tRNA(Leu) + L-leucine + ATP = L-leucyl-tRNA(Leu) + AMP + diphosphate. The protein is Leucine--tRNA ligase of Geobacter sp. (strain M21).